Here is a 404-residue protein sequence, read N- to C-terminus: Cysteine desulfurase IscS (404 aa).

Pyridoxal 5'-phosphate-binding positions include 75–76 (AT), Asn-155, Gln-183, and 203–205 (SGH). Lys-206 bears the N6-(pyridoxal phosphate)lysine mark. Pyridoxal 5'-phosphate is bound at residue Thr-243. The active-site Cysteine persulfide intermediate is Cys-328. Cys-328 is a binding site for [2Fe-2S] cluster.

Belongs to the class-V pyridoxal-phosphate-dependent aminotransferase family. NifS/IscS subfamily. In terms of assembly, homodimer. Forms a heterotetramer with IscU, interacts with other sulfur acceptors. Pyridoxal 5'-phosphate is required as a cofactor.

The protein resides in the cytoplasm. It catalyses the reaction (sulfur carrier)-H + L-cysteine = (sulfur carrier)-SH + L-alanine. Its pathway is cofactor biosynthesis; iron-sulfur cluster biosynthesis. Its function is as follows. Master enzyme that delivers sulfur to a number of partners involved in Fe-S cluster assembly, tRNA modification or cofactor biosynthesis. Catalyzes the removal of elemental sulfur atoms from cysteine to produce alanine. Functions as a sulfur delivery protein for Fe-S cluster synthesis onto IscU, an Fe-S scaffold assembly protein, as well as other S acceptor proteins. The protein is Cysteine desulfurase IscS of Shewanella putrefaciens (strain CN-32 / ATCC BAA-453).